We begin with the raw amino-acid sequence, 434 residues long: Perilipin-3 (434 aa).

The segment at 1 to 22 is disordered; sequence MSADGAEADGSTQVTVEEPVQQ. Position 2 is an N-acetylserine (Ser-2). Position 31 is a phosphoserine (Ser-31). Lys-65 carries the N6-acetyllysine modification. A Phosphoserine modification is found at Ser-91. Residue Lys-122 forms a Glycyl lysine isopeptide (Lys-Gly) (interchain with G-Cter in SUMO1) linkage. Phosphoserine occurs at positions 130 and 148. A Phosphothreonine modification is found at Thr-170. Phosphoserine occurs at positions 175 and 179. Thr-216 carries the post-translational modification Phosphothreonine. A phosphoserine mark is found at Ser-217 and Ser-241. Tyr-251 carries the phosphotyrosine modification. Coiled-coil stretches lie at residues 252 to 280 and 353 to 377; these read EHSL…SLME and TNVK…SSIH.

The protein belongs to the perilipin family. As to quaternary structure, homooligomer. Interacts with M6PR (via the cytoplasmic domain). Interacts with IGF2R (via the cytoplasmic domain). In terms of processing, phosphorylation at Tyr-251 by isoform 1 of CHKA (CHKalpha2) promotes dissociation from lipid droplets: dissociation is followed by recruitment of autophagosome machinery to lipid droplets and subsequent lipid droplet lipolysis.

It is found in the lipid droplet. The protein resides in the endosome membrane. The protein localises to the cytoplasm. Its function is as follows. Structural component of lipid droplets, which is required for the formation and maintenance of lipid storage droplets. Required for the transport of mannose 6-phosphate receptors (MPR) from endosomes to the trans-Golgi network. The protein is Perilipin-3 (PLIN3) of Pongo abelii (Sumatran orangutan).